The sequence spans 359 residues: Protein-glutamate methylesterase/protein-glutamine glutaminase 2 (359 aa).

Residues 6 to 123 (KVMIVDDSAL…KSFLEDASND (118 aa)) enclose the Response regulatory domain. Aspartate 57 is modified (4-aspartylphosphate). Residues 167–359 (ERTTDQLVAI…GAIVGYGKSC (193 aa)) enclose the CheB-type methylesterase domain. Residues serine 179, histidine 205, and aspartate 301 contribute to the active site.

Belongs to the CheB family. Phosphorylated by CheA. Phosphorylation of the N-terminal regulatory domain activates the methylesterase activity.

It is found in the cytoplasm. The enzyme catalyses [protein]-L-glutamate 5-O-methyl ester + H2O = L-glutamyl-[protein] + methanol + H(+). The catalysed reaction is L-glutaminyl-[protein] + H2O = L-glutamyl-[protein] + NH4(+). Its function is as follows. Involved in chemotaxis. Part of a chemotaxis signal transduction system that modulates chemotaxis in response to various stimuli. Catalyzes the demethylation of specific methylglutamate residues introduced into the chemoreceptors (methyl-accepting chemotaxis proteins or MCP) by CheR. Also mediates the irreversible deamidation of specific glutamine residues to glutamic acid. This chain is Protein-glutamate methylesterase/protein-glutamine glutaminase 2, found in Dechloromonas aromatica (strain RCB).